A 574-amino-acid chain; its full sequence is Septation ring formation regulator EzrA (574 aa).

The Extracellular segment spans residues M1–L7. A helical membrane pass occupies residues L8–I26. The Cytoplasmic portion of the chain corresponds to R27–F574. Coiled-coil stretches lie at residues N102 to N141, E274 to S350, and Q459 to A520.

The protein belongs to the EzrA family.

It localises to the cell membrane. In terms of biological role, negative regulator of FtsZ ring formation; modulates the frequency and position of FtsZ ring formation. Inhibits FtsZ ring formation at polar sites. Interacts either with FtsZ or with one of its binding partners to promote depolymerization. In Streptococcus pyogenes serotype M1, this protein is Septation ring formation regulator EzrA.